We begin with the raw amino-acid sequence, 309 residues long: Low-density lipoprotein receptor-related protein 1 (309 aa).

This sequence belongs to the LDLR family.

It localises to the endoplasmic reticulum. The protein localises to the golgi apparatus. Its subcellular location is the endosome. Functionally, involved in endocytosis, fatty acid beta-oxidation and infectious growth. Plays a critical role in the accumulation of MSN2 from the cytosol to the nucleus by activating the cyclic AMP signaling pathway. MSN2 can then target the dienoyl-coenzyme A isomerase DCI1 and other genes involved in fatty acid beta-oxidation, which is important for lipid droplets degradation and infectious growth. The sequence is that of Low-density lipoprotein receptor-related protein 1 from Pyricularia oryzae (strain 70-15 / ATCC MYA-4617 / FGSC 8958) (Rice blast fungus).